A 484-amino-acid polypeptide reads, in one-letter code: UDP-N-acetylmuramoyl-L-alanyl-D-glutamate--2,6-diaminopimelate ligase (484 aa).

Position 29 (serine 29) interacts with UDP-N-acetyl-alpha-D-muramoyl-L-alanyl-D-glutamate. 108-114 contributes to the ATP binding site; the sequence is GTSGKTS. UDP-N-acetyl-alpha-D-muramoyl-L-alanyl-D-glutamate contacts are provided by residues 150-151, serine 177, glutamine 183, and arginine 185; that span reads TT. Lysine 217 carries the N6-carboxylysine modification. Meso-2,6-diaminopimelate contacts are provided by residues arginine 381, 405–408, glycine 453, and glutamate 457; that span reads DNPR. The short motif at 405-408 is the Meso-diaminopimelate recognition motif element; the sequence is DNPR.

The protein belongs to the MurCDEF family. MurE subfamily. It depends on Mg(2+) as a cofactor. Post-translationally, carboxylation is probably crucial for Mg(2+) binding and, consequently, for the gamma-phosphate positioning of ATP.

Its subcellular location is the cytoplasm. It catalyses the reaction UDP-N-acetyl-alpha-D-muramoyl-L-alanyl-D-glutamate + meso-2,6-diaminopimelate + ATP = UDP-N-acetyl-alpha-D-muramoyl-L-alanyl-gamma-D-glutamyl-meso-2,6-diaminopimelate + ADP + phosphate + H(+). It participates in cell wall biogenesis; peptidoglycan biosynthesis. Its function is as follows. Catalyzes the addition of meso-diaminopimelic acid to the nucleotide precursor UDP-N-acetylmuramoyl-L-alanyl-D-glutamate (UMAG) in the biosynthesis of bacterial cell-wall peptidoglycan. In Mesorhizobium japonicum (strain LMG 29417 / CECT 9101 / MAFF 303099) (Mesorhizobium loti (strain MAFF 303099)), this protein is UDP-N-acetylmuramoyl-L-alanyl-D-glutamate--2,6-diaminopimelate ligase.